The primary structure comprises 850 residues: Translation initiation factor IF-2 (850 aa).

Disordered regions lie at residues Leu50–Ser72 and Phe92–Val267. Residues Ser96–Arg135 show a composition bias toward basic and acidic residues. Positions Arg136–Asp172 are enriched in low complexity. Composition is skewed to basic and acidic residues over residues Ala173–Ala210 and Thr234–Arg243. A compositionally biased stretch (basic residues) spans Arg244–Gln257. One can recognise a tr-type G domain in the interval Ser350–Glu517. The interval Gly359–Thr366 is G1. Gly359 to Thr366 lines the GTP pocket. Positions Gly384 to His388 are G2. The segment at Asp405–Gly408 is G3. GTP is bound by residues Asp405 to His409 and Asn459 to Asp462. Residues Asn459 to Asp462 form a G4 region. The G5 stretch occupies residues Ser495 to Lys497.

It belongs to the TRAFAC class translation factor GTPase superfamily. Classic translation factor GTPase family. IF-2 subfamily.

It localises to the cytoplasm. One of the essential components for the initiation of protein synthesis. Protects formylmethionyl-tRNA from spontaneous hydrolysis and promotes its binding to the 30S ribosomal subunits. Also involved in the hydrolysis of GTP during the formation of the 70S ribosomal complex. This chain is Translation initiation factor IF-2, found in Pseudomonas entomophila (strain L48).